Here is a 159-residue protein sequence, read N- to C-terminus: Phosphopantetheine adenylyltransferase (159 aa).

Thr10 serves as a coordination point for substrate. ATP is bound by residues 10-11 (TF) and His18. 3 residues coordinate substrate: Lys42, Leu74, and Arg88. Residues 89 to 91 (GMR), Glu99, and 124 to 130 (WSYVSST) contribute to the ATP site.

Belongs to the bacterial CoaD family. In terms of assembly, homohexamer. Requires Mg(2+) as cofactor.

The protein localises to the cytoplasm. The enzyme catalyses (R)-4'-phosphopantetheine + ATP + H(+) = 3'-dephospho-CoA + diphosphate. It participates in cofactor biosynthesis; coenzyme A biosynthesis; CoA from (R)-pantothenate: step 4/5. Functionally, reversibly transfers an adenylyl group from ATP to 4'-phosphopantetheine, yielding dephospho-CoA (dPCoA) and pyrophosphate. The polypeptide is Phosphopantetheine adenylyltransferase (Mannheimia succiniciproducens (strain KCTC 0769BP / MBEL55E)).